Here is a 226-residue protein sequence, read N- to C-terminus: Cytidylate kinase (226 aa).

10–18 (GFSSTGKST) serves as a coordination point for ATP.

This sequence belongs to the cytidylate kinase family. Type 1 subfamily.

It is found in the cytoplasm. The enzyme catalyses CMP + ATP = CDP + ADP. The catalysed reaction is dCMP + ATP = dCDP + ADP. This is Cytidylate kinase from Flavobacterium psychrophilum (strain ATCC 49511 / DSM 21280 / CIP 103535 / JIP02/86).